Reading from the N-terminus, the 741-residue chain is Pentatricopeptide repeat-containing protein At1g05670, mitochondrial (741 aa).

The N-terminal 21 residues, 1 to 21 (MKKPFTGLLMKRGTLSSFRNF), are a transit peptide targeting the mitochondrion. PPR repeat units follow at residues 174-208 (DPRV…GLVL), 209-244 (SVDS…GVCW), 245-279 (NVAS…GYTP), 280-314 (DVIS…GLKP), 315-349 (NSYI…GILP), 350-384 (DTVV…DITP), 385-419 (DVLT…GLEP), 420-454 (DSVT…GCSP), 455-489 (NVVT…GLQP), 490-524 (NIFT…GLNA), 525-559 (DTVT…GLQP), 560-594 (TIVT…GIAP), 595-629 (NATT…GVGP), 630-664 (DGKT…GFSV), and 665-699 (SVST…GLAA).

This sequence belongs to the PPR family. P subfamily.

It localises to the mitochondrion. This Arabidopsis thaliana (Mouse-ear cress) protein is Pentatricopeptide repeat-containing protein At1g05670, mitochondrial.